The chain runs to 165 residues: Transcription antitermination protein NusB (165 aa).

The interval 1 to 20 (MSDVENGGEPRQPSVKPANQ) is disordered.

It belongs to the NusB family.

In terms of biological role, involved in transcription antitermination. Required for transcription of ribosomal RNA (rRNA) genes. Binds specifically to the boxA antiterminator sequence of the ribosomal RNA (rrn) operons. The protein is Transcription antitermination protein NusB of Agrobacterium fabrum (strain C58 / ATCC 33970) (Agrobacterium tumefaciens (strain C58)).